Here is a 77-residue protein sequence, read N- to C-terminus: MQVRAVLVLAVVALVAVATSRAQLNFTPWWGKRALGAPAAGDCVSASPQALLSILNAAQAEVQKLIDCSRFTSEANS.

Residues 1-22 (MQVRAVLVLAVVALVAVATSRA) form the signal peptide. The residue at position 23 (glutamine 23) is a Pyrrolidone carboxylic acid. Tryptophan 30 is subject to Tryptophan amide.

The protein belongs to the AKH/HRTH/RPCH family.

It is found in the secreted. Its function is as follows. This hormone, released from cells in the corpora cardiaca, causes release of diglycerides from the fat body and stimulation of muscles to use these diglycerides as an energy source during energy-demanding processes. This is Adipokinetic prohormone type 3 from Locusta migratoria (Migratory locust).